A 174-amino-acid polypeptide reads, in one-letter code: Adipose-secreted signaling protein (174 aa).

A2 is subject to N-acetylalanine. T147 bears the Phosphothreonine mark.

It belongs to the ADISSP family.

It is found in the secreted. In terms of biological role, adipocyte-secreted protein (adipokine) that acts as a key regulator for white adipose tissue (WAT) thermogenesis and glucose homeostasis at least in part through activation of protein kinase A (PKA). The sequence is that of Adipose-secreted signaling protein from Rattus norvegicus (Rat).